A 414-amino-acid chain; its full sequence is Cytochrome c biogenesis protein Ccs1 (414 aa).

The next 3 membrane-spanning stretches (helical) occupy residues L14 to I34, S73 to T93, and V159 to T179.

Belongs to the Ccs1/CcsB family. May interact with CcsA.

It localises to the plastid. Its subcellular location is the chloroplast thylakoid membrane. In terms of biological role, required during biogenesis of c-type cytochromes (cytochrome c6 and cytochrome f) at the step of heme attachment. The polypeptide is Cytochrome c biogenesis protein Ccs1 (Guillardia theta (Cryptophyte)).